Reading from the N-terminus, the 645-residue chain is Envelope glycoprotein (645 aa).

Residues 1–36 form the signal peptide; the sequence is MEGPTHPKPFKDKTFSWDLIILVGVVRVLLRLDVGM. Over 37–589 the chain is Extracellular; it reads ANPSPHQVYN…FNKSPWFTTL (553 aa). Residues Asn-46 and Asn-61 are each glycosylated (N-linked (GlcNAc...) asparagine; by host). Disulfide bonds link Cys-128-Cys-150 and Cys-142-Cys-155. A disordered region spans residues 238–283; that stretch reads QAMGPNLVLPEQKPPSRQSQTKSKVATQKPQTNGTTPRSVAPATMS. Residues 252–275 show a composition bias toward polar residues; that stretch reads PSRQSQTKSKVATQKPQTNGTTPR. 3 N-linked (GlcNAc...) asparagine; by host glycosylation sites follow: Asn-270, Asn-305, and Asn-310. 3 cysteine pairs are disulfide-bonded: Cys-315-Cys-318, Cys-315-Cys-542, and Cys-534-Cys-541. Residues 315–318 carry the CXXC motif; that stretch reads CWLC. Asn-334, Asn-337, Asn-377, Asn-393, and Asn-413 each carry an N-linked (GlcNAc...) asparagine; by host glycan. The tract at residues 451–471 is fusion peptide; the sequence is ISLTVALMLGGLTVGGIAAGV. Coiled-coil stretches lie at residues 479–528 and 538–574; these read LETA…ILFL and KEECCFYADHTGLVRDNMAKLRERLKQRQQLFDSQQG. The interval 517 to 533 is immunosuppression; it reads LQNRRGLDILFLQGGGL. A CX6CC motif is present at residues 534 to 542; sequence CAALKEECC. The chain crosses the membrane as a helical span at residues 590–610; sequence ISSIMGPLLILLLILLFGPCI. The S-palmitoyl cysteine; by host moiety is linked to residue Cys-609. Over 611–645 the chain is Cytoplasmic; the sequence is LNRLVQFVKDRISVVQALILTQQYQQIQQYDPDRP.

In terms of assembly, the mature envelope protein (Env) consists of a trimer of SU-TM heterodimers attached by a labile interchain disulfide bond. Specific enzymatic cleavages in vivo yield mature proteins. Envelope glycoproteins are synthesized as an inactive precursor that is N-glycosylated and processed likely by host cell furin or by a furin-like protease in the Golgi to yield the mature SU and TM proteins. The cleavage site between SU and TM requires the minimal sequence [KR]-X-[KR]-R. The R-peptide is released from the C-terminus of the cytoplasmic tail of the TM protein upon particle formation as a result of proteolytic cleavage by the viral protease. Cleavage of this peptide is required for TM to become fusogenic. Post-translationally, the CXXC motif is highly conserved across a broad range of retroviral envelope proteins. It is thought to participate in the formation of a labile disulfide bond possibly with the CX6CC motif present in the transmembrane protein. Isomerization of the intersubunit disulfide bond to an SU intrachain disulfide bond is thought to occur upon receptor recognition in order to allow membrane fusion. In terms of processing, the transmembrane protein is palmitoylated. The R-peptide is palmitoylated.

The protein resides in the virion membrane. It localises to the host cell membrane. Functionally, the surface protein (SU) attaches the virus to the host cell by binding to its receptor. This interaction triggers the refolding of the transmembrane protein (TM) and is thought to activate its fusogenic potential by unmasking its fusion peptide. Fusion occurs at the host cell plasma membrane. In terms of biological role, the transmembrane protein (TM) acts as a class I viral fusion protein. Under the current model, the protein has at least 3 conformational states: pre-fusion native state, pre-hairpin intermediate state, and post-fusion hairpin state. During viral and target cell membrane fusion, the coiled coil regions (heptad repeats) assume a trimer-of-hairpins structure, positioning the fusion peptide in close proximity to the C-terminal region of the ectodomain. The formation of this structure appears to drive apposition and subsequent fusion of viral and target cell membranes. Membranes fusion leads to delivery of the nucleocapsid into the cytoplasm. This chain is Envelope glycoprotein (env), found in Feline sarcoma virus (strain SM) (Sm-FeSV).